We begin with the raw amino-acid sequence, 269 residues long: 23S rRNA (adenosine(1067)-2'-O)-methyltransferase (269 aa).

S-adenosyl-L-methionine contacts are provided by arginine 135, arginine 165, leucine 195, glycine 218, isoleucine 238, and leucine 247.

It belongs to the class IV-like SAM-binding methyltransferase superfamily. RNA methyltransferase TsnR/AvirB family. In terms of assembly, homodimer.

The catalysed reaction is adenosine(1067) in 23S rRNA + S-adenosyl-L-methionine = 2'-O-methyladenosine(1067) in 23S rRNA + S-adenosyl-L-homocysteine + H(+). Specifically methylates the adenosine-1067 in 23S ribosomal RNA. Confers resistance to antibiotic thiostrepton. This is 23S rRNA (adenosine(1067)-2'-O)-methyltransferase (tsnR) from Streptomyces azureus.